Reading from the N-terminus, the 502-residue chain is uncharacterized protein (502 aa).

This is an uncharacterized protein from Frog virus 3 (isolate Goorha) (FV-3).